A 299-amino-acid chain; its full sequence is Nucleoporin POM34 (299 aa).

A disordered region spans residues 1–39; sequence MKIQAGQLGLDDNDVPGPLPDTDSKPSSQSQNDTPMFKL. The segment covering 25–34 has biased composition (polar residues); that stretch reads KPSSQSQNDT. Helical transmembrane passes span 64–84 and 133–153; these read IMTN…IKFF and LFHL…LSTV. S270 carries the post-translational modification Phosphoserine. The residue at position 273 (T273) is a Phosphothreonine. 2 positions are modified to phosphoserine: S292 and S294.

As to quaternary structure, component of the nuclear pore complex (NPC). NPC constitutes the exclusive means of nucleocytoplasmic transport. NPCs allow the passive diffusion of ions and small molecules and the active, nuclear transport receptor-mediated bidirectional transport of macromolecules such as proteins, RNAs, ribonucleoparticles (RNPs), and ribosomal subunits across the nuclear envelope. Due to its 8-fold rotational symmetry, all subunits are present with 8 copies or multiples thereof.

The protein resides in the nucleus. Its subcellular location is the nuclear pore complex. It localises to the nucleus membrane. Functions as a component of the nuclear pore complex (NPC). NPC components, collectively referred to as nucleoporins (NUPs), can play the role of both NPC structural components and of docking or interaction partners for transiently associated nuclear transport factors. The chain is Nucleoporin POM34 (POM34) from Saccharomyces cerevisiae (strain ATCC 204508 / S288c) (Baker's yeast).